A 521-amino-acid chain; its full sequence is MAAVATSFCFSPHRSPSRFGNPNSSIRRTIVCKSSPRDESPAVSTSSQRPEKQQNPLTSQNKPDHDHKPDPGIGKIGMEIMSIALPAALALAADPITSLVDTAFVGHIGSAELAAVGVSVSVFNLVSKLFNVPLLNVTTSFVAEEQAIAAKDDNDSIETSKKVLPSVSTSLVLAAGVGIAEAIALSLGSDFLMDVMAIPFDSPMRIPAEQFLRLRAYGAPPIVVALAAQGAFRGFKDTTTPLYAVVAGNVLNAVLDPILIFVLGFGISGAAAATVISEYLIAFILLWKLNENVVLLSPQIKVGRANQYLKSGGLLIGRTVALLVPFTLATSLAAQNGPTQMAGHQIVLEIWLAVSLLTDALAIAAQSLLATTYSQGEYKQAREVLFGVLQVGLATGTGLAAVLFITFEPFSSLFTTDSEVLKIALSGTLFVAGSQPVNALAFVLDGLYYGVSDFGFAAYSMVIVGFISSLFMLVAAPTFGLAGIWTGLFLFMALRLVAGAWRLGTRTGPWKMLWSAPEKPE.

The N-terminal 31 residues, 1–31 (MAAVATSFCFSPHRSPSRFGNPNSSIRRTIV), are a transit peptide targeting the chloroplast. Residues 12-73 (PHRSPSRFGN…DHDHKPDPGI (62 aa)) are disordered. 2 stretches are compositionally biased toward polar residues: residues 18–27 (RFGNPNSSIR) and 42–61 (AVST…TSQN). 12 helical membrane-spanning segments follow: residues 80 to 100 (IMSI…TSLV), 103 to 123 (AFVG…VSVF), 167 to 187 (VSTS…ALSL), 213 to 235 (RLRA…FRGF), 242 to 262 (LYAV…LIFV), 268 to 288 (SGAA…LLWK), 314 to 334 (LLIG…SLAA), 345 to 365 (QIVL…AIAA), 385 to 405 (LFGV…VLFI), 423 to 443 (IALS…LAFV), 454 to 474 (FGFA…FMLV), and 481 to 503 (LAGI…AWRL).

Belongs to the multi antimicrobial extrusion (MATE) (TC 2.A.66.1) family. In terms of tissue distribution, expressed in shoots.

The protein resides in the plastid. The protein localises to the chloroplast membrane. The polypeptide is Protein DETOXIFICATION 44, chloroplastic (Arabidopsis thaliana (Mouse-ear cress)).